The sequence spans 401 residues: Tyrosine--tRNA ligase (401 aa).

The 'HIGH' region signature appears at 45 to 54; the sequence is PTAPDLHLGH. The 'KMSKS' region motif lies at 230–234; it reads KMSKS. Lysine 233 is a binding site for ATP. The 61-residue stretch at 339–399 folds into the S4 RNA-binding domain; that stretch reads IWLAKALVEC…GKRKFAKLKV (61 aa).

Belongs to the class-I aminoacyl-tRNA synthetase family. TyrS type 2 subfamily. In terms of assembly, homodimer.

It localises to the cytoplasm. It catalyses the reaction tRNA(Tyr) + L-tyrosine + ATP = L-tyrosyl-tRNA(Tyr) + AMP + diphosphate + H(+). In terms of biological role, catalyzes the attachment of tyrosine to tRNA(Tyr) in a two-step reaction: tyrosine is first activated by ATP to form Tyr-AMP and then transferred to the acceptor end of tRNA(Tyr). The protein is Tyrosine--tRNA ligase of Campylobacter jejuni subsp. jejuni serotype O:2 (strain ATCC 700819 / NCTC 11168).